A 222-amino-acid chain; its full sequence is tRNA (guanine-N(1)-)-methyltransferase (222 aa).

Residues G110 and 130-135 contribute to the S-adenosyl-L-methionine site; that span reads IGDYVL.

Belongs to the RNA methyltransferase TrmD family. As to quaternary structure, homodimer.

The protein localises to the cytoplasm. The catalysed reaction is guanosine(37) in tRNA + S-adenosyl-L-methionine = N(1)-methylguanosine(37) in tRNA + S-adenosyl-L-homocysteine + H(+). In terms of biological role, specifically methylates guanosine-37 in various tRNAs. This Protochlamydia amoebophila (strain UWE25) protein is tRNA (guanine-N(1)-)-methyltransferase.